A 154-amino-acid chain; its full sequence is Probable chemoreceptor glutamine deamidase CheD (154 aa).

It belongs to the CheD family.

It carries out the reaction L-glutaminyl-[protein] + H2O = L-glutamyl-[protein] + NH4(+). Functionally, probably deamidates glutamine residues to glutamate on methyl-accepting chemotaxis receptors (MCPs), playing an important role in chemotaxis. In Methanococcus vannielii (strain ATCC 35089 / DSM 1224 / JCM 13029 / OCM 148 / SB), this protein is Probable chemoreceptor glutamine deamidase CheD.